We begin with the raw amino-acid sequence, 861 residues long: MSEEPTPVSGNDKQLLNKAWEITQKKTFTAWCNSHLRKLGSSIEQIDTDFTDGIKLAQLLEVISNDPVFKVNKTPKLRIHNIQNVGLCLKHIESHGVKLVGIGAEELVDKNLKMTLGMIWTIILRFAIQDISIEELSAKEALLLWCQRKTEGYDRVKVGNFHTSFQDGLAFCALIHKHRPDLINFDSLNKDDKAGNLQLAFDIAEKELDIPKMLDVSDMLDVVRPDERSVMTYVAQYYHHFSASRKAETAGKQVGKVLDTFMLLEQTKSDYLKRANELVQWINDKQASLESRDFGDSIESVQSFMNAHKEYKKTEKPPKGQEVSELEAIYNSLQTKLRLIKREPFVAPAGLTPNEIDSTWSALEKAEQEHAEALRIELKRQKKIAVLLQKYNRILKKLENWATTKSVYLGSNETGDSITAVQAKLKNLEAFDGECQSLEGQSNSDLLSILAQLTELNYNGVPELTERKDTFFAQQWTGVKSSAETYKNTLLAELERLQKIEDSLVEFAKRAAQLNVWIEAADDHVFDPINVDSVQGVQEIQEKFDAFLHDQSQQFAELEALAALTQQLRELGRSENDYSVISYDELSAKWNNLLAGIEERKVQLANELTTQTNNDVLCQSFSVKANEISDYVRVTLDAISQNTSSDPQEQLNNIRAIITAHAEKKPELDELYTIASQLEEAQVVDNKHTQHSLESIKLKWDKLNTLAKKNEQVVEGEILAKQLTGVTAEELSEFKACFSHFDKDNDNKLNRLEFSSCLKSIGDELTEEQLNQVISKIDTDGNGTISFEEFIDYMVSSRKGTDSVESTKAAFKVMAEDKDFITEAQIRAAISDSKQIDYLLASMPAVEGGFDYNSFAEKLYQ.

The actin-binding stretch occupies residues 1–239 (MSEEPTPVSG…VMTYVAQYYH (239 aa)). 2 Calponin-homology (CH) domains span residues 22 to 127 (ITQK…LRFA) and 136 to 242 (LSAK…HHFS). Spectrin repeat units lie at residues 240 to 365 (HFSA…ALEK), 366 to 480 (AEQE…TGVK), 481 to 601 (SSAE…EERK), and 602 to 714 (VQLA…EQVV). 2 EF-hand domains span residues 729 to 764 (EELSEFKACFSHFDKDNDNKLNRLEFSSCLKSIGDE) and 765 to 800 (LTEEQLNQVISKIDTDGNGTISFEEFIDYMVSSRKG). Residues Asp-742, Asp-744, Asp-746, Lys-748, Glu-753, Asp-778, Asp-780, Asn-782, Thr-784, and Glu-789 each coordinate Ca(2+).

This sequence belongs to the alpha-actinin family. Homodimer; antiparallel.

The protein localises to the cytoplasm. The protein resides in the cell cortex. Its subcellular location is the contractile vacuole. It localises to the cytoplasmic vesicle. It is found in the phagosome. Its function is as follows. F-actin cross-linking protein which is thought to anchor actin to a variety of intracellular structures. This is a bundling protein. Increases the actin-stimulated ATPase activity of myosin. Involved in vegetative cell growth, phagocytosis, motility and development, probably through stabilization of the actin network in the cortical cytoskeleton. In Dictyostelium discoideum (Social amoeba), this protein is Alpha-actinin A (abpA).